The sequence spans 307 residues: Dihydroorotate dehydrogenase B (NAD(+)), catalytic subunit (307 aa).

FMN-binding positions include S22 and 46–47; that span reads KT. Residues K46, 70-74, and N128 contribute to the substrate site; that span reads NAVGL. N128 contributes to the FMN binding site. C131 acts as the Nucleophile in catalysis. FMN is bound by residues K166 and I192. 193–194 contacts substrate; it reads NT. Residues G218, 244–245, and 266–267 each bind FMN; these read GG and GT.

The protein belongs to the dihydroorotate dehydrogenase family. Type 1 subfamily. As to quaternary structure, heterotetramer of 2 PyrK and 2 PyrD type B subunits. The cofactor is FMN.

It is found in the cytoplasm. The enzyme catalyses (S)-dihydroorotate + NAD(+) = orotate + NADH + H(+). Its pathway is pyrimidine metabolism; UMP biosynthesis via de novo pathway; orotate from (S)-dihydroorotate (NAD(+) route): step 1/1. Its function is as follows. Catalyzes the conversion of dihydroorotate to orotate with NAD(+) as electron acceptor. This chain is Dihydroorotate dehydrogenase B (NAD(+)), catalytic subunit (pyrD), found in Desulforudis audaxviator (strain MP104C).